Consider the following 65-residue polypeptide: Photosystem II reaction center protein J (65 aa).

Residues 1-17 (MSTKLKGPDGRIPDRLP) show a composition bias toward basic and acidic residues. Positions 1–21 (MSTKLKGPDGRIPDRLPDGSP) are disordered. A helical membrane pass occupies residues 36–56 (LWLVATVGGMAVLSVLGLFFF).

The protein belongs to the PsbJ family. PSII is composed of 1 copy each of membrane proteins PsbA, PsbB, PsbC, PsbD, PsbE, PsbF, PsbH, PsbI, PsbJ, PsbK, PsbL, PsbM, PsbT, PsbX, PsbY, Psb30/Ycf12, peripheral proteins PsbO, CyanoQ (PsbQ), PsbU, PsbV and a large number of cofactors. It forms dimeric complexes.

It is found in the cellular thylakoid membrane. Its function is as follows. One of the components of the core complex of photosystem II (PSII). PSII is a light-driven water:plastoquinone oxidoreductase that uses light energy to abstract electrons from H(2)O, generating O(2) and a proton gradient subsequently used for ATP formation. It consists of a core antenna complex that captures photons, and an electron transfer chain that converts photonic excitation into a charge separation. This chain is Photosystem II reaction center protein J, found in Prochlorococcus marinus (strain MIT 9313).